A 155-amino-acid polypeptide reads, in one-letter code: DNA-binding protein inhibitor ID-1 (155 aa).

The bHLH domain maps to 53 to 105 (LPALLDEQQVNVLLYDMNGCYSRLKELVPTLPQNRKVSKVEILQHVIDYIRDL). The short motif at 98-111 (VIDYIRDLQLELNS) is the Nuclear export signal element.

In terms of assembly, heterodimer with other HLH proteins. Interacts with COPS5, IFI204, GATA4 and NKX2-5. Interacts with CLOCK and BMAL1.

Its subcellular location is the cytoplasm. It is found in the nucleus. Its function is as follows. Transcriptional regulator (lacking a basic DNA binding domain) which negatively regulates the basic helix-loop-helix (bHLH) transcription factors by forming heterodimers and inhibiting their DNA binding and transcriptional activity. Implicated in regulating a variety of cellular processes, including cellular growth, senescence, differentiation, apoptosis, angiogenesis, and neoplastic transformation. Inhibits skeletal muscle and cardiac myocyte differentiation. Regulates the circadian clock by repressing the transcriptional activator activity of the CLOCK-BMAL1 heterodimer. In Homo sapiens (Human), this protein is DNA-binding protein inhibitor ID-1 (ID1).